A 518-amino-acid polypeptide reads, in one-letter code: Cytochrome P450 monooxygenase pyr3 (518 aa).

The chain crosses the membrane as a helical span at residues 26–46 (GVAIVLFLAPLALHLVSSYLF). Residue Cys458 participates in heme binding.

This sequence belongs to the cytochrome P450 family. Heme serves as cofactor.

It localises to the membrane. It functions in the pathway secondary metabolite biosynthesis; terpenoid biosynthesis. In terms of biological role, cytochrome P450 monooxygenase; part of the gene cluster that mediates the biosynthesis of pyripyropene A, a specific human acyl-coenzyme A:cholesterol acyltransferase 2 inhibitor. The first step of the pathway is the synthesis of nicotinyl-CoA from nicotinic acid by the nicotinic acid-CoA ligase pyr1. Nicotinyl-CoA is then a substrate of polyketide synthase pyr2 to produce 4-hydroxy-6-(3-pyridinyl)-2H-pyran-2-one (HPPO) which is further prenylated by the polyprenyl transferase pyr6 to yield farnesyl-HPPO. The next steps consist of an epoxidation of farnesyl-HPPO to epoxyfarnesyl-HPPO by FAD-dependent monooxygenase pyr5 and a cyclization of the terpenoid portion by the terpene cyclase pyr4 to yield deacetyl-pyripyropene E. The 2 cytochrome P450 monooxygenases pyr3 and pyr9, and the 2 acetyltransferases pyr7 and pyr8 are involved in the conversion of deacetyl-pyripyropene E into pyripyropene A through several cycles of oxidation and acetylation steps. Pyr7 acetylates deacetyl-pyripyropene E to pyripyropene E which is oxidized to 11-deacetyl-pyripyropene O by pyr3, which is in turn acetylated into pyripyropene O by pyr8. Pyripyropene O is then oxidized to deacetyl-pyripyropene A by pyr9. Deacetyl-pyripyropene A is finally acetylated to pyripyropene A by pyr8. The chain is Cytochrome P450 monooxygenase pyr3 from Aspergillus fumigatus (strain ATCC MYA-4609 / CBS 101355 / FGSC A1100 / Af293) (Neosartorya fumigata).